Reading from the N-terminus, the 445-residue chain is tRNA modification GTPase MnmE (445 aa).

(6S)-5-formyl-5,6,7,8-tetrahydrofolate is bound by residues Arg20, Glu79, and Lys119. The TrmE-type G domain maps to 215 to 371; sequence GLKLAIIGPP…ILKNIENIAE (157 aa). Position 225 (Asn225) interacts with K(+). GTP is bound by residues 225–230, 244–250, and 269–272; these read NTGKSS, SNIAGTT, and DTAG. Position 229 (Ser229) interacts with Mg(2+). K(+) contacts are provided by Ser244, Ile246, and Thr249. A Mg(2+)-binding site is contributed by Thr250. Lys445 serves as a coordination point for (6S)-5-formyl-5,6,7,8-tetrahydrofolate.

This sequence belongs to the TRAFAC class TrmE-Era-EngA-EngB-Septin-like GTPase superfamily. TrmE GTPase family. In terms of assembly, homodimer. Heterotetramer of two MnmE and two MnmG subunits. The cofactor is K(+).

It localises to the cytoplasm. In terms of biological role, exhibits a very high intrinsic GTPase hydrolysis rate. Involved in the addition of a carboxymethylaminomethyl (cmnm) group at the wobble position (U34) of certain tRNAs, forming tRNA-cmnm(5)s(2)U34. This is tRNA modification GTPase MnmE from Rickettsia prowazekii (strain Madrid E).